Consider the following 541-residue polypeptide: 1'-carboxy-chondrochloren decarboxylase (541 aa).

Residues 39–226 (TTHRIPAIIS…TRMTIWLAPR (188 aa)) enclose the FAD-binding PCMH-type domain.

The catalysed reaction is 1'-carboxy-chondrochloren A + FAD + 2 H(+) = chondrochloren A + FADH2 + CO2. It catalyses the reaction 1'-carboxy-chondrochloren B + FAD + 2 H(+) = chondrochloren B + FADH2 + CO2. Its pathway is antibiotic biosynthesis. With respect to regulation, activity is not affected by the addition of EDTA or/and EGTA chelators or in the presence of external metals like Zn(2+), Mg(2+), Mn(2+) and Fe(2+). Activity is inhibited under low oxygen conditions. Functionally, oxidative decarboxylase involved in the biosynthesis of the antibiotics chondrochloren A and chondrochloren B. Catalyzes the decarboxylation of biologically inactive pre-chondrochloren A and pre-chondrochloren B to yield mature chondrochloren A and chondrochloren B, respectively. Cannot decarboxylate free L-tyrosine, 3-chloro-tyrosine or a number of chlorinated and non-chlorinated analog substrates containing variable N-acyl chains. In Chondromyces crocatus, this protein is 1'-carboxy-chondrochloren decarboxylase.